The following is a 230-amino-acid chain: LexA repressor (230 aa).

The segment at 1–21 (MSDDSSETRTGGRRGADAGLT) is disordered. Positions 44–64 (IREIGDAVGLTSTSSVAHQLR) form a DNA-binding region, H-T-H motif. Residues Ser154 and Lys191 each act as for autocatalytic cleavage activity in the active site.

This sequence belongs to the peptidase S24 family. As to quaternary structure, homodimer.

The catalysed reaction is Hydrolysis of Ala-|-Gly bond in repressor LexA.. Represses a number of genes involved in the response to DNA damage (SOS response), including recA and lexA. In the presence of single-stranded DNA, RecA interacts with LexA causing an autocatalytic cleavage which disrupts the DNA-binding part of LexA, leading to derepression of the SOS regulon and eventually DNA repair. In Mycobacterium sp. (strain JLS), this protein is LexA repressor.